We begin with the raw amino-acid sequence, 119 residues long: Large ribosomal subunit protein bL20 (119 aa).

It belongs to the bacterial ribosomal protein bL20 family.

Its function is as follows. Binds directly to 23S ribosomal RNA and is necessary for the in vitro assembly process of the 50S ribosomal subunit. It is not involved in the protein synthesizing functions of that subunit. In Clostridium beijerinckii (strain ATCC 51743 / NCIMB 8052) (Clostridium acetobutylicum), this protein is Large ribosomal subunit protein bL20.